Here is a 310-residue protein sequence, read N- to C-terminus: tRNA dimethylallyltransferase (310 aa).

ATP is bound at residue 13–20 (GPTASGKT). A substrate-binding site is contributed by 15–20 (TASGKT). Interaction with substrate tRNA stretches follow at residues 38–41 (DSAL), 162–166 (QRLSR), 243–248 (RCVGYR), and 276–283 (KRQITWLR).

Belongs to the IPP transferase family. Monomer. It depends on Mg(2+) as a cofactor.

The catalysed reaction is adenosine(37) in tRNA + dimethylallyl diphosphate = N(6)-dimethylallyladenosine(37) in tRNA + diphosphate. Functionally, catalyzes the transfer of a dimethylallyl group onto the adenine at position 37 in tRNAs that read codons beginning with uridine, leading to the formation of N6-(dimethylallyl)adenosine (i(6)A). This is tRNA dimethylallyltransferase from Aliivibrio fischeri (strain ATCC 700601 / ES114) (Vibrio fischeri).